We begin with the raw amino-acid sequence, 591 residues long: Metalloendopeptidase OPG085 (591 aa).

His-41 contributes to the Zn(2+) binding site. The active site involves Glu-44. Zn(2+)-binding residues include His-45 and Glu-112.

It belongs to the peptidase M44 family. Requires Zn(2+) as cofactor. Undergoes proteolytic processing during the course of infection. May be cleaved into 46 kDa and 22 kDa products (Potential).

Its subcellular location is the virion. Functionally, probably involved in maturation of some viral proteins by processing them preferentially at Ala-Gly-|-Ser/Thr/Lys motifs. Does not seem to be responsible for the cleavage of major core proteins. This is Metalloendopeptidase OPG085 (OPG085) from Homo sapiens (Human).